The primary structure comprises 210 residues: T-cell surface glycoprotein CD8 beta chain (210 aa).

The first 21 residues, 1-21 (MQPGLWLLLATQLAALRGSSV), serve as a signal peptide directing secretion. The Ig-like V-type domain occupies 22–132 (LQQAPGSVMV…ELTFGKGTRL (111 aa)). Residues 22 to 170 (LQQAPGSVMV…VTQKGPSCGL (149 aa)) lie on the Extracellular side of the membrane. The cysteines at positions 41 and 116 are disulfide-linked. N-linked (GlcNAc...) asparagine glycosylation occurs at Asn102. The segment at 139-161 (PTNSQPTKKPTPRKKMCRPPSPV) is disordered. Residues 171–191 (LTLGLLVAGVLVLLVSLGVAI) traverse the membrane as a helical segment. At 192–210 (HLYRLKRRARLRLLKQFYK) the chain is on the cytoplasmic side.

In terms of assembly, forms disulfide-linked heterodimers with CD8A at the cell surface. Interacts with CD3D; this interaction couples TCR-CD3 with CD8. Interacts with LCK. Post-translationally, phosphorylated as a consequence of T-cell activation. Palmitoylated at the cytoplasmic tail and thereby targets the heterodimer CD8A/CD8B to lipid rafts unlike CD8A homodimers.

It is found in the cell membrane. Its function is as follows. Integral membrane glycoprotein that plays an essential role in the immune response and serves multiple functions in responses against both external and internal offenses. In T-cells, functions primarily as a coreceptor for MHC class I molecule:peptide complex. The antigens presented by class I peptides are derived from cytosolic proteins while class II derived from extracellular proteins. Interacts simultaneously with the T-cell receptor (TCR) and the MHC class I proteins presented by antigen presenting cells (APCs). In turn, recruits the Src kinase LCK to the vicinity of the TCR-CD3 complex. A palmitoylation site in the cytoplasmic tail of CD8B chain contributes to partitioning of CD8 into the plasma membrane lipid rafts where signaling proteins are enriched. Once LCK recruited, it initiates different intracellular signaling pathways by phosphorylating various substrates ultimately leading to lymphokine production, motility, adhesion and activation of cytotoxic T-lymphocytes (CTLs). Additionally, plays a critical role in thymic selection of CD8+ T-cells. The protein is T-cell surface glycoprotein CD8 beta chain (CD8B) of Felis catus (Cat).